Here is a 444-residue protein sequence, read N- to C-terminus: N-succinylarginine dihydrolase (444 aa).

Substrate-binding positions include 19-28 (AGLSFGNVAS), N110, and 137-138 (HR). E174 is an active-site residue. R214 lines the substrate pocket. H250 is an active-site residue. Residues D252 and N362 each coordinate substrate. Residue C368 is the Nucleophile of the active site.

This sequence belongs to the succinylarginine dihydrolase family. Homodimer.

The enzyme catalyses N(2)-succinyl-L-arginine + 2 H2O + 2 H(+) = N(2)-succinyl-L-ornithine + 2 NH4(+) + CO2. It participates in amino-acid degradation; L-arginine degradation via AST pathway; L-glutamate and succinate from L-arginine: step 2/5. Functionally, catalyzes the hydrolysis of N(2)-succinylarginine into N(2)-succinylornithine, ammonia and CO(2). The polypeptide is N-succinylarginine dihydrolase (Shewanella baltica (strain OS185)).